We begin with the raw amino-acid sequence, 147 residues long: Ponticulin-like protein C1 (147 aa).

An N-terminal signal peptide occupies residues 1–20; that stretch reads MKFTKSLLLLIVAVFASSNA. A lipid anchor (GPI-like-anchor amidated asparagine) is attached at N118. A glycan (N-linked (GlcNAc...) asparagine) is linked at N118. The propeptide at 119–147 is removed in mature form; that stretch reads SSESDSSDSTRIGASFALAASVLLSMLAI.

This sequence belongs to the ponticulin family. The GPI-like-anchor contains a phosphoceramide group, rather than a phosphatidyl group.

It localises to the cell membrane. In Dictyostelium discoideum (Social amoeba), this protein is Ponticulin-like protein C1 (ponC1).